Here is a 197-residue protein sequence, read N- to C-terminus: RING-H2 finger protein ATL80 (197 aa).

A helical transmembrane segment spans residues 30 to 50; sequence LVVILAALLCALICVLGLIAV. Residues 111-153 form an RING-type; atypical zinc finger; the sequence is CAICLAEFSAGDELRVLPQCGHGFHVACIDTWLGSHSSCPSCR. Residues 168–197 form a disordered region; sequence PGSSSSGLESEPEIEIRIKQGEDDPNSFLP.

The protein belongs to the RING-type zinc finger family. ATL subfamily.

It localises to the membrane. The catalysed reaction is S-ubiquitinyl-[E2 ubiquitin-conjugating enzyme]-L-cysteine + [acceptor protein]-L-lysine = [E2 ubiquitin-conjugating enzyme]-L-cysteine + N(6)-ubiquitinyl-[acceptor protein]-L-lysine.. It functions in the pathway protein modification; protein ubiquitination. In terms of biological role, may be involved in the early steps of the plant defense signaling pathway. This chain is RING-H2 finger protein ATL80 (ATL80), found in Arabidopsis thaliana (Mouse-ear cress).